Reading from the N-terminus, the 504-residue chain is Pup--protein ligase (504 aa).

E30 contributes to the Mg(2+) binding site. Residue R74 coordinates ATP. A Mg(2+)-binding site is contributed by Y76. The active-site Proton acceptor is D78. E84 contributes to the Mg(2+) binding site. T87 and W459 together coordinate ATP.

Belongs to the Pup ligase/Pup deamidase family. Pup-conjugating enzyme subfamily.

The catalysed reaction is ATP + [prokaryotic ubiquitin-like protein]-L-glutamate + [protein]-L-lysine = ADP + phosphate + N(6)-([prokaryotic ubiquitin-like protein]-gamma-L-glutamyl)-[protein]-L-lysine.. The protein operates within protein degradation; proteasomal Pup-dependent pathway. It functions in the pathway protein modification; protein pupylation. Functionally, catalyzes the covalent attachment of the prokaryotic ubiquitin-like protein modifier Pup to the proteasomal substrate proteins, thereby targeting them for proteasomal degradation. This tagging system is termed pupylation. The ligation reaction involves the side-chain carboxylate of the C-terminal glutamate of Pup and the side-chain amino group of a substrate lysine. This Corynebacterium urealyticum (strain ATCC 43042 / DSM 7109) protein is Pup--protein ligase.